Here is a 540-residue protein sequence, read N- to C-terminus: Chaperonin GroEL (540 aa).

ATP is bound by residues 30 to 33, Lys51, 87 to 91, Gly415, 479 to 481, and Asp495; these read TLAP, DGTTT, and NAA.

This sequence belongs to the chaperonin (HSP60) family. In terms of assembly, forms a cylinder of 14 subunits composed of two heptameric rings stacked back-to-back. Interacts with the co-chaperonin GroES.

Its subcellular location is the cytoplasm. It catalyses the reaction ATP + H2O + a folded polypeptide = ADP + phosphate + an unfolded polypeptide.. Functionally, together with its co-chaperonin GroES, plays an essential role in assisting protein folding. The GroEL-GroES system forms a nano-cage that allows encapsulation of the non-native substrate proteins and provides a physical environment optimized to promote and accelerate protein folding. This is Chaperonin GroEL from Methylovorus sp. (strain SS1 / DSM 11726).